A 1112-amino-acid polypeptide reads, in one-letter code: Lacto-N-biosidase (1112 aa).

Residues 1–34 form the signal peptide; the sequence is MEKSSNRRFGVRTVAAIVAGLMVGGMCTAMTASA. Cys187 and Cys189 are disulfide-bonded. Gln190, Glu216, Asn259, Asp320, Glu321, Tyr419, and Asp467 together coordinate beta-D-galactosyl-(1-&gt;3)-N-acetyl-D-glucosamine. The active-site Proton donor/acceptor is the Glu321. A disulfide bridge connects residues Cys564 and Cys589. The disordered stretch occupies residues 938-969; that stretch reads ATPVELTEPEQPKDNPEVTETPEATGVTVSGD. One can recognise a BIG2 domain in the interval 975-1041; sequence ALSLKKGTTA…ANGKSASVTV (67 aa). Residues 1044–1061 show a composition bias toward low complexity; that stretch reads TEDSEVPGPTGPTEPTKP. The segment at 1044–1081 is disordered; it reads TEDSEVPGPTGPTEPTKPGTEKPTTKPTTKPNDGKLSA. Residues 1086 to 1106 form a helical membrane-spanning segment; it reads TAVLATIAALFALAGGAVVAV.

Belongs to the glycosyl hydrolase 20 family.

The protein resides in the cell membrane. The catalysed reaction is beta-D-Gal-(1-&gt;3)-beta-D-GlcNAc-(1-&gt;3)-beta-D-Gal-(1-&gt;4)-D-Glc + H2O = beta-D-galactosyl-(1-&gt;3)-N-acetyl-D-glucosamine + lactose. Present in the infant gut, this enzyme is involved in the assimilation of type-1 human milk oligosaccharides (HMOs). It hydrolyzes via a retaining mechanism the beta-D-GlcNAc-(1-&gt;3)-beta-D-Gal linkage in lacto-N-tetraose (LNT or beta-D-Gal-(1-&gt;3)-beta-D-GlcNAc-(1-&gt;3)-beta-D-Gal-(1-&gt;4)-D-Glc), an abundant HMO unique to human breast milk, releasing lacto-N-biose (LNB or beta-D-Gal-(1-&gt;3)-D-GlcNAc) and lactose. Is a key enzymatic factor for growth and proliferation of B.bifidum in the gut ecosystem of breast-fed infants. Has substrate preference for unmodified beta-linked LNB since it does not hydrolyze the fucosylated forms of lacto-N-tetraose (lacto-N-fucopentaose I and II) or lacto-N-neotetraose. Is also able to display transglycosylation activity in vitro. This is Lacto-N-biosidase from Bifidobacterium bifidum (strain DSM 20082 / JCM 1254 / BCRC 11844 / KCTC 3440 / E319f (Variant a)).